Reading from the N-terminus, the 338-residue chain is Large ribosomal subunit protein uL3 (338 aa).

A disordered region spans residues 1–37; that stretch reads MPQPSRPRKGSMGFSPRKRAESEVPRIRSWASNDGAP.

The protein belongs to the universal ribosomal protein uL3 family. As to quaternary structure, part of the 50S ribosomal subunit. Forms a cluster with proteins L14 and L24e.

In terms of biological role, one of the primary rRNA binding proteins, it binds directly near the 3'-end of the 23S rRNA, where it nucleates assembly of the 50S subunit. This chain is Large ribosomal subunit protein uL3, found in Haloquadratum walsbyi (strain DSM 16790 / HBSQ001).